A 156-amino-acid chain; its full sequence is Small ribosomal subunit protein uS7 (156 aa).

The protein belongs to the universal ribosomal protein uS7 family. In terms of assembly, part of the 30S ribosomal subunit. Contacts proteins S9 and S11.

In terms of biological role, one of the primary rRNA binding proteins, it binds directly to 16S rRNA where it nucleates assembly of the head domain of the 30S subunit. Is located at the subunit interface close to the decoding center, probably blocks exit of the E-site tRNA. This chain is Small ribosomal subunit protein uS7, found in Shewanella frigidimarina (strain NCIMB 400).